We begin with the raw amino-acid sequence, 219 residues long: Elongation factor Ts (219 aa).

The segment at 82-85 (TDFV) is involved in Mg(2+) ion dislocation from EF-Tu.

The protein belongs to the EF-Ts family.

The protein localises to the cytoplasm. Its function is as follows. Associates with the EF-Tu.GDP complex and induces the exchange of GDP to GTP. It remains bound to the aminoacyl-tRNA.EF-Tu.GTP complex up to the GTP hydrolysis stage on the ribosome. This Anaeromyxobacter dehalogenans (strain 2CP-1 / ATCC BAA-258) protein is Elongation factor Ts.